The following is a 248-amino-acid chain: Type III pantothenate kinase (248 aa).

ATP is bound at residue 6-13 (DCGNSLIK). Substrate is bound by residues Tyr92 and 99–102 (GLDR). Asp101 acts as the Proton acceptor in catalysis. Residue Asp121 participates in K(+) binding. ATP is bound at residue Thr124. Residue Thr180 coordinates substrate.

Belongs to the type III pantothenate kinase family. As to quaternary structure, homodimer. Requires NH4(+) as cofactor. The cofactor is K(+).

Its subcellular location is the cytoplasm. It catalyses the reaction (R)-pantothenate + ATP = (R)-4'-phosphopantothenate + ADP + H(+). It functions in the pathway cofactor biosynthesis; coenzyme A biosynthesis; CoA from (R)-pantothenate: step 1/5. Functionally, catalyzes the phosphorylation of pantothenate (Pan), the first step in CoA biosynthesis. This is Type III pantothenate kinase from Pseudomonas aeruginosa (strain LESB58).